Consider the following 280-residue polypeptide: Protein IMPACT homolog (280 aa).

In terms of domain architecture, RWD spans 9 to 109 (DELLALESIY…QAAAERESKL (101 aa)).

Belongs to the IMPACT family. As to quaternary structure, interacts (via N-terminus) with gcn1 (via C-terminus); this interaction reduces the gcn1-gcn20 complex formation and prevents the interaction of gcn1 with gcn2 protein kinase and gcn2 activation in amino acid-starved cells. Interacts (via C-terminus) with act1; this interaction occurs in a gcn1-independent manner. Interacts with rpl39; this interaction occurs in a gcn1-independent manner. Associates (via middle region) with ribosomes; this association occurs in a gcn1-independent manner and persists under amino acid starvation conditions.

It is found in the cytoplasm. It localises to the nucleus. Its function is as follows. Translational regulator that ensures constant high levels of translation under amino acid starvation. Plays a role as a negative regulator of the gcn2 kinase activity; impairs gcn1-mediated gcn2 activation, and hence gcn2-mediated eIF-2-alpha phosphorylation in amino acid-starved cells and subsequent down-regulation of protein synthesis. In normal conditions, it resides in a actin complex and has no activity. This Schizosaccharomyces pombe (strain 972 / ATCC 24843) (Fission yeast) protein is Protein IMPACT homolog (yih1).